The primary structure comprises 192 residues: Der GTPase-activating protein YihI (192 aa).

The interval 1–80 (MSRTKKTRRI…KAAVKEVKDP (80 aa)) is disordered. Composition is skewed to basic and acidic residues over residues 9–25 (RITD…KPEQ), 37–48 (TRYELDAKAREE), and 65–80 (DPAE…VKDP).

This sequence belongs to the YihI family. In terms of assembly, interacts with Der.

A GTPase-activating protein (GAP) that modifies Der/EngA GTPase function. May play a role in ribosome biogenesis. This chain is Der GTPase-activating protein YihI, found in Actinobacillus pleuropneumoniae serotype 7 (strain AP76).